Reading from the N-terminus, the 391-residue chain is Phosphoglycerate kinase (391 aa).

Substrate contacts are provided by residues 21-23 (DLN), Arg36, 59-62 (HLGR), Arg113, and Arg146. Residues Lys197, Glu319, and 345–348 (GGDT) contribute to the ATP site.

This sequence belongs to the phosphoglycerate kinase family. As to quaternary structure, monomer.

It localises to the cytoplasm. The catalysed reaction is (2R)-3-phosphoglycerate + ATP = (2R)-3-phospho-glyceroyl phosphate + ADP. It functions in the pathway carbohydrate degradation; glycolysis; pyruvate from D-glyceraldehyde 3-phosphate: step 2/5. The chain is Phosphoglycerate kinase from Shewanella sediminis (strain HAW-EB3).